We begin with the raw amino-acid sequence, 143 residues long: SsrA-binding protein (143 aa).

This sequence belongs to the SmpB family.

It is found in the cytoplasm. Its function is as follows. Required for rescue of stalled ribosomes mediated by trans-translation. Binds to transfer-messenger RNA (tmRNA), required for stable association of tmRNA with ribosomes. tmRNA and SmpB together mimic tRNA shape, replacing the anticodon stem-loop with SmpB. tmRNA is encoded by the ssrA gene; the 2 termini fold to resemble tRNA(Ala) and it encodes a 'tag peptide', a short internal open reading frame. During trans-translation Ala-aminoacylated tmRNA acts like a tRNA, entering the A-site of stalled ribosomes, displacing the stalled mRNA. The ribosome then switches to translate the ORF on the tmRNA; the nascent peptide is terminated with the 'tag peptide' encoded by the tmRNA and targeted for degradation. The ribosome is freed to recommence translation, which seems to be the essential function of trans-translation. The chain is SsrA-binding protein from Mycoplasmopsis synoviae (strain 53) (Mycoplasma synoviae).